The chain runs to 97 residues: Co-chaperonin GroES (97 aa).

The protein belongs to the GroES chaperonin family. In terms of assembly, heptamer of 7 subunits arranged in a ring. Interacts with the chaperonin GroEL.

It is found in the cytoplasm. In terms of biological role, together with the chaperonin GroEL, plays an essential role in assisting protein folding. The GroEL-GroES system forms a nano-cage that allows encapsulation of the non-native substrate proteins and provides a physical environment optimized to promote and accelerate protein folding. GroES binds to the apical surface of the GroEL ring, thereby capping the opening of the GroEL channel. The polypeptide is Co-chaperonin GroES (Klebsiella aerogenes (Enterobacter aerogenes)).